Consider the following 522-residue polypeptide: Peptide chain release factor 3 (522 aa).

Positions lysine 9–glutamine 276 constitute a tr-type G domain. GTP is bound by residues serine 18–threonine 25, aspartate 86–histidine 90, and asparagine 140–aspartate 143.

Belongs to the TRAFAC class translation factor GTPase superfamily. Classic translation factor GTPase family. PrfC subfamily.

It localises to the cytoplasm. Functionally, increases the formation of ribosomal termination complexes and stimulates activities of RF-1 and RF-2. It binds guanine nucleotides and has strong preference for UGA stop codons. It may interact directly with the ribosome. The stimulation of RF-1 and RF-2 is significantly reduced by GTP and GDP, but not by GMP. The polypeptide is Peptide chain release factor 3 (Lactobacillus gasseri (strain ATCC 33323 / DSM 20243 / BCRC 14619 / CIP 102991 / JCM 1131 / KCTC 3163 / NCIMB 11718 / NCTC 13722 / AM63)).